The sequence spans 69 residues: DNA gyrase inhibitor YacG (69 aa).

4 residues coordinate Zn(2+): Cys-7, Cys-10, Cys-26, and Cys-30.

The protein belongs to the DNA gyrase inhibitor YacG family. Interacts with GyrB. Requires Zn(2+) as cofactor.

Functionally, inhibits all the catalytic activities of DNA gyrase by preventing its interaction with DNA. Acts by binding directly to the C-terminal domain of GyrB, which probably disrupts DNA binding by the gyrase. The polypeptide is DNA gyrase inhibitor YacG (Shewanella baltica (strain OS155 / ATCC BAA-1091)).